Reading from the N-terminus, the 229-residue chain is Pdp3-interacting factor 1 (229 aa).

The Nucleophile role is filled by Asp-12. Mg(2+) contacts are provided by Asp-12, Asp-14, and Asp-176. The active-site Proton donor is Asp-14.

It belongs to the HAD-like hydrolase superfamily. As to quaternary structure, component of the mst2 complex composed of at least eaf6, mst2, nto1, pdp3, ptf1, ptf2 and tfg3. Requires Mg(2+) as cofactor.

The protein resides in the cytoplasm. The protein localises to the nucleus. The enzyme catalyses D-ribitol 5-phosphate + H2O = ribitol + phosphate. The catalysed reaction is D-sorbitol 6-phosphate + H2O = D-sorbitol + phosphate. It carries out the reaction sn-glycerol 1-phosphate + H2O = glycerol + phosphate. It catalyses the reaction D-erythrose 4-phosphate + H2O = D-erythrose + phosphate. In terms of biological role, component of the mst2 complex which is a highly specific H3 lysine 14 (H3K14) acetyltransferase that functions together with gcn5 to regulate global levels of H3K14 acetylation (H3K14ac), critical for DNA damage checkpoint activation. Its function is as follows. May also function as a sugar alcohol (polyol) phosphatase that prevents accumulation of toxic levels of polyol phosphates, which can impair glycolysis by inhibiting glucose-6-phosphate isomerase. The chain is Pdp3-interacting factor 1 from Schizosaccharomyces pombe (strain 972 / ATCC 24843) (Fission yeast).